Consider the following 431-residue polypeptide: Enolase (431 aa).

Gln164 lines the (2R)-2-phosphoglycerate pocket. Glu206 serves as the catalytic Proton donor. Residues Asp243, Glu288, and Asp315 each contribute to the Mg(2+) site. 4 residues coordinate (2R)-2-phosphoglycerate: Lys340, Arg369, Ser370, and Lys391. Residue Lys340 is the Proton acceptor of the active site.

This sequence belongs to the enolase family. Requires Mg(2+) as cofactor.

The protein resides in the cytoplasm. The protein localises to the secreted. It localises to the cell surface. The enzyme catalyses (2R)-2-phosphoglycerate = phosphoenolpyruvate + H2O. It functions in the pathway carbohydrate degradation; glycolysis; pyruvate from D-glyceraldehyde 3-phosphate: step 4/5. Catalyzes the reversible conversion of 2-phosphoglycerate (2-PG) into phosphoenolpyruvate (PEP). It is essential for the degradation of carbohydrates via glycolysis. This chain is Enolase, found in Fervidobacterium nodosum (strain ATCC 35602 / DSM 5306 / Rt17-B1).